The chain runs to 216 residues: 4-hydroxy-tetrahydrodipicolinate reductase (216 aa).

NAD(+)-binding positions include serine 9 to methionine 12, glycine 71 to threonine 73, and alanine 95 to phenylalanine 98. The Proton donor/acceptor role is filled by histidine 127. Histidine 128 lines the (S)-2,3,4,5-tetrahydrodipicolinate pocket. Lysine 131 lines the NAD(+) pocket. Lysine 131 (proton donor) is an active-site residue. Glycine 137 to threonine 138 is a (S)-2,3,4,5-tetrahydrodipicolinate binding site.

This sequence belongs to the DapB family. Homotetramer.

Its subcellular location is the cytoplasm. The enzyme catalyses (S)-2,3,4,5-tetrahydrodipicolinate + NAD(+) + H2O = (2S,4S)-4-hydroxy-2,3,4,5-tetrahydrodipicolinate + NADH + H(+). The catalysed reaction is (S)-2,3,4,5-tetrahydrodipicolinate + NADP(+) + H2O = (2S,4S)-4-hydroxy-2,3,4,5-tetrahydrodipicolinate + NADPH + H(+). It participates in amino-acid biosynthesis; L-lysine biosynthesis via DAP pathway; (S)-tetrahydrodipicolinate from L-aspartate: step 4/4. Is inhibited by high concentrations of NADH. Its function is as follows. Catalyzes the conversion of 4-hydroxy-tetrahydrodipicolinate (HTPA) to tetrahydrodipicolinate. Uses NADPH as a reductant with much more efficiency than NADH. This is 4-hydroxy-tetrahydrodipicolinate reductase from Thermotoga maritima (strain ATCC 43589 / DSM 3109 / JCM 10099 / NBRC 100826 / MSB8).